The primary structure comprises 480 residues: tRNA (uracil-5-)-methyltransferase homolog B (480 aa).

The S-adenosyl-L-methionine site is built by glutamine 299, glutamate 349, and asparagine 399. Catalysis depends on cysteine 427, which acts as the Nucleophile. The active-site Proton acceptor is glutamate 473.

The protein belongs to the class I-like SAM-binding methyltransferase superfamily. RNA M5U methyltransferase family.

Its subcellular location is the mitochondrion. It catalyses the reaction uridine(54) in tRNA + S-adenosyl-L-methionine = 5-methyluridine(54) in tRNA + S-adenosyl-L-homocysteine + H(+). It carries out the reaction a uridine in 12S rRNA + S-adenosyl-L-methionine = a 5-methyluridine in 12S rRNA + S-adenosyl-L-homocysteine + H(+). Its function is as follows. Mitochondrial S-adenosyl-L-methionine-dependent methyltransferase that catalyzes the formation of 5-methyl-uridine in tRNAs and 12S rRNA. Catalyzes the methylation of uridine at position 54 (m5U54) in all tRNAs. Specifically methylates the uridine in position 429 of 12S rRNA (m5U429). Does not affect RNA stability or mitochondrial translation. This chain is tRNA (uracil-5-)-methyltransferase homolog B (trmt2b), found in Danio rerio (Zebrafish).